A 327-amino-acid polypeptide reads, in one-letter code: Nuclear apoptosis-inducing factor 1 (327 aa).

Positions 1–70 (MAVPAKKRKM…CRRELPEVKK (70 aa)) are required for nuclear localization and apoptosis-inducing activity. Residues 87–98 (RAAVEGGEAPGP) are compositionally biased toward low complexity. Disordered regions lie at residues 87-118 (RAAV…GGGP) and 303-327 (NTAN…SIIQ). The segment covering 104 to 118 (AGGPGTGGGSGGGGP) has biased composition (gly residues). Positions 316–327 (VAQNGQPDSIIQ) are enriched in polar residues.

It belongs to the NAIF1 family. Interacts with HARBI1. As to expression, widely expressed.

The protein localises to the nucleus. Functionally, induces apoptosis. This Homo sapiens (Human) protein is Nuclear apoptosis-inducing factor 1 (NAIF1).